We begin with the raw amino-acid sequence, 233 residues long: Proteasome subunit beta type-6 (233 aa).

Positions 1 to 12 (MDLNLDAPHSMG) are cleaved as a propeptide — removed in mature form. T13 serves as the catalytic Nucleophile.

It belongs to the peptidase T1B family. As to quaternary structure, component of the 20S core complex of the 26S proteasome. The 26S proteasome is composed of a core protease (CP), known as the 20S proteasome, capped at one or both ends by the 19S regulatory particle (RP/PA700). The 20S proteasome core is composed of 28 subunits that are arranged in four stacked rings, resulting in a barrel-shaped structure. The two end rings are each formed by seven alpha subunits, and the two central rings are each formed by seven beta subunits. The catalytic chamber with the active sites is on the inside of the barrel.

The protein resides in the cytoplasm. It is found in the nucleus. It catalyses the reaction Cleavage of peptide bonds with very broad specificity.. In terms of biological role, the proteasome is a multicatalytic proteinase complex which is characterized by its ability to cleave peptides with Arg, Phe, Tyr, Leu, and Glu adjacent to the leaving group at neutral or slightly basic pH. The proteasome has an ATP-dependent proteolytic activity. The chain is Proteasome subunit beta type-6 (PBA1) from Arabidopsis thaliana (Mouse-ear cress).